Consider the following 366-residue polypeptide: Beta sliding clamp (366 aa).

The protein belongs to the beta sliding clamp family. As to quaternary structure, forms a ring-shaped head-to-tail homodimer around DNA which binds and tethers DNA polymerases and other proteins to the DNA. The DNA replisome complex has a single clamp-loading complex (3 tau and 1 each of delta, delta', psi and chi subunits) which binds 3 Pol III cores (1 core on the leading strand and 2 on the lagging strand) each with a beta sliding clamp dimer. Additional proteins in the replisome are other copies of gamma, psi and chi, Ssb, DNA helicase and RNA primase.

Its subcellular location is the cytoplasm. In terms of biological role, confers DNA tethering and processivity to DNA polymerases and other proteins. Acts as a clamp, forming a ring around DNA (a reaction catalyzed by the clamp-loading complex) which diffuses in an ATP-independent manner freely and bidirectionally along dsDNA. Initially characterized for its ability to contact the catalytic subunit of DNA polymerase III (Pol III), a complex, multichain enzyme responsible for most of the replicative synthesis in bacteria; Pol III exhibits 3'-5' exonuclease proofreading activity. The beta chain is required for initiation of replication as well as for processivity of DNA replication. The protein is Beta sliding clamp (dnaN) of Vibrio cholerae serotype O1 (strain ATCC 39315 / El Tor Inaba N16961).